A 142-amino-acid polypeptide reads, in one-letter code: gSG7 salivary protein (142 aa).

Positions 1–26 (MAVRMTVILPLAMALICLMQAEPATA) are cleaved as a signal peptide. Cystine bridges form between Cys-84–Cys-139 and Cys-107–Cys-117.

As to quaternary structure, associates with activated host C3-convertase complex C3bBb (C3-CFB). Interacts with host properdin (CFP), a regulator of the alternate pathway of complement. Female salivary gland (at protein level).

The protein localises to the secreted. In terms of biological role, salivary protein that potently inhibits the alternative pathway of complement system activation in the host while having no inhibitory effect on the classical or lectin pathways. Binds and stabilizes activated host C3-convertase complex C3bBb (C3-CFB) and inhibits its convertase activity. Enhances accumulation of C3bBb on immobilized properdin. The polypeptide is gSG7 salivary protein (Anopheles albimanus (New world malaria mosquito)).